The following is a 547-amino-acid chain: Vacuolar fusion protein MON1 homolog B (547 aa).

Met-1 is modified (N-acetylmethionine). Residues 1–106 (MEAGGDTAAP…GGDPSDEEWR (106 aa)) form a disordered region. The segment covering 57–66 (PPSPSPPPQS) has biased composition (pro residues). Residues Ser-59 and Ser-61 each carry the phosphoserine modification.

This sequence belongs to the MON1/SAND family. As to quaternary structure, interacts with CCNT2; down-regulates CCNT2-mediated activation of viral promoters during herpes simplex virus 1/HHV-1 infection. Found in a complex with RMC1, CCZ1 MON1A and MON1B.

In Macaca fascicularis (Crab-eating macaque), this protein is Vacuolar fusion protein MON1 homolog B (MON1B).